The primary structure comprises 450 residues: Glucose-6-phosphate isomerase (450 aa).

Residue E290 is the Proton donor of the active site. Residues H311 and K425 contribute to the active site.

Belongs to the GPI family.

The protein resides in the cytoplasm. The enzyme catalyses alpha-D-glucose 6-phosphate = beta-D-fructose 6-phosphate. It functions in the pathway carbohydrate biosynthesis; gluconeogenesis. Its pathway is carbohydrate degradation; glycolysis; D-glyceraldehyde 3-phosphate and glycerone phosphate from D-glucose: step 2/4. Catalyzes the reversible isomerization of glucose-6-phosphate to fructose-6-phosphate. The protein is Glucose-6-phosphate isomerase of Listeria innocua serovar 6a (strain ATCC BAA-680 / CLIP 11262).